The sequence spans 137 residues: Lysozyme (137 aa).

Positions 1–20 (MSAVLVLALVLLSLTCVTDA) are cleaved as a signal peptide. The region spanning 21–134 (ISDACLTCIC…WNAVKNQGCS (114 aa)) is the I-type lysozyme domain. 6 cysteine pairs are disulfide-bonded: cysteine 25-cysteine 102, cysteine 30-cysteine 37, cysteine 42-cysteine 51, cysteine 64-cysteine 84, cysteine 74-cysteine 80, and cysteine 98-cysteine 116. Glutamate 33 functions as the Proton donor in the catalytic mechanism. The active-site Nucleophile is the aspartate 45. Residue 57–63 (KKSYWID) coordinates substrate. Residues tyrosine 88 and 109-111 (HNG) contribute to the substrate site.

Belongs to the glycosyl hydrolase 22 family. Type-I lysozyme subfamily.

Its subcellular location is the secreted. It catalyses the reaction Hydrolysis of (1-&gt;4)-beta-linkages between N-acetylmuramic acid and N-acetyl-D-glucosamine residues in a peptidoglycan and between N-acetyl-D-glucosamine residues in chitodextrins.. In terms of biological role, has bacteriolytic activity. May play a role in digestion and in the host defense mechanisms against invading microbes. The chain is Lysozyme (lysoz) from Ostrea edulis (Native oyster).